Consider the following 271-residue polypeptide: Ribosomal RNA small subunit methyltransferase A (271 aa).

S-adenosyl-L-methionine-binding residues include Asn-19, Leu-21, Gly-46, Glu-67, Asp-92, and Asn-113.

This sequence belongs to the class I-like SAM-binding methyltransferase superfamily. rRNA adenine N(6)-methyltransferase family. RsmA subfamily.

Its subcellular location is the cytoplasm. The catalysed reaction is adenosine(1518)/adenosine(1519) in 16S rRNA + 4 S-adenosyl-L-methionine = N(6)-dimethyladenosine(1518)/N(6)-dimethyladenosine(1519) in 16S rRNA + 4 S-adenosyl-L-homocysteine + 4 H(+). In terms of biological role, specifically dimethylates two adjacent adenosines (A1518 and A1519) in the loop of a conserved hairpin near the 3'-end of 16S rRNA in the 30S particle. May play a critical role in biogenesis of 30S subunits. This is Ribosomal RNA small subunit methyltransferase A from Photobacterium profundum (strain SS9).